We begin with the raw amino-acid sequence, 444 residues long: Chromosomal replication initiator protein DnaA (444 aa).

Positions 1–66 (MKSEIIESLK…SKTLRELFGK (66 aa)) are domain I, interacts with DnaA modulators. The interval 66–100 (KPMDFRIEHASAKTEEKLDSNEDEPLVKKRPLILT) is domain II. A domain III, AAA+ region region spans residues 101 to 317 (PLNPILTFEN…GALVKLIMYQ (217 aa)). The ATP site is built by Gly-144, Gly-146, Lys-147, and Thr-148. The domain IV, binds dsDNA stretch occupies residues 318–444 (QISGEKVDLQ…VTGQILDQSV (127 aa)).

It belongs to the DnaA family. Oligomerizes as a right-handed, spiral filament on DNA at oriC.

It is found in the cytoplasm. Plays an essential role in the initiation and regulation of chromosomal replication. ATP-DnaA binds to the origin of replication (oriC) to initiate formation of the DNA replication initiation complex once per cell cycle. Binds the DnaA box (a 9 base pair repeat at the origin) and separates the double-stranded (ds)DNA. Forms a right-handed helical filament on oriC DNA; dsDNA binds to the exterior of the filament while single-stranded (ss)DNA is stabiized in the filament's interior. The ATP-DnaA-oriC complex binds and stabilizes one strand of the AT-rich DNA unwinding element (DUE), permitting loading of DNA polymerase. After initiation quickly degrades to an ADP-DnaA complex that is not apt for DNA replication. Binds acidic phospholipids. The chain is Chromosomal replication initiator protein DnaA from Pseudothermotoga lettingae (strain ATCC BAA-301 / DSM 14385 / NBRC 107922 / TMO) (Thermotoga lettingae).